We begin with the raw amino-acid sequence, 60 residues long: Small integral membrane protein 3 (60 aa).

Residues 20–40 (IWAIVLIILATVVIMTSLFLC) form a helical membrane-spanning segment.

Its subcellular location is the membrane. In Rattus norvegicus (Rat), this protein is Small integral membrane protein 3 (Smim3).